The sequence spans 310 residues: Protoheme IX farnesyltransferase (310 aa).

The next 9 helical transmembrane spans lie at 31–51 (VMSLVIFTGFVGMWLAPDSIH), 52–72 (PLIAGIAVICIALGAGSAGAM), 102–119 (ALSFGLITGFFAVFFMAL), 123–145 (ILASFLLLFTIFYYICIYTIWLK), 151–171 (NIVIGGVSGALPPVIGHAAVS), 179–199 (IILFLIIFIWTPPHSWAIALF), 225–245 (ILIYSIILFIVSLMPFFIGMN), 248–268 (IYLIIVCIIGLVFLYYAFSLF), and 281–301 (FTYSIFYLCFIFILLSSTSTI).

It belongs to the UbiA prenyltransferase family. Protoheme IX farnesyltransferase subfamily.

Its subcellular location is the cell inner membrane. It carries out the reaction heme b + (2E,6E)-farnesyl diphosphate + H2O = Fe(II)-heme o + diphosphate. It functions in the pathway porphyrin-containing compound metabolism; heme O biosynthesis; heme O from protoheme: step 1/1. Functionally, converts heme B (protoheme IX) to heme O by substitution of the vinyl group on carbon 2 of heme B porphyrin ring with a hydroxyethyl farnesyl side group. In Rickettsia prowazekii (strain Madrid E), this protein is Protoheme IX farnesyltransferase.